A 3432-amino-acid polypeptide reads, in one-letter code: Hybrid signal transduction histidine kinase G (3432 aa).

Composition is skewed to low complexity over residues 44-68, 76-90, and 126-145; these read HFSN…TTTN, SQLQ…QQNN, and QPQQ…SQKQ. 2 disordered regions span residues 44–109 and 124–240; these read HFSN…TNSS and DDQP…HNIN. Residues 146 to 157 show a composition bias toward polar residues; sequence TSQLNISGNNSG. Composition is skewed to low complexity over residues 165–177 and 187–238; these read TISN…NFIH and KTPI…NNHN. A Protein kinase domain is found at 263 to 792; it reads LSFKHGYNSG…YGLKKDLEMF (530 aa). ATP-binding positions include 269 to 277 and Lys-305; that span reads YNSGLGGNF. Residues 399-419 are compositionally biased toward low complexity; sequence NNNNNNNNSYNNNYNNNNNNN. Disordered stretches follow at residues 399-426 and 443-542; these read NNNN…TSPI and FQLN…STPL. Residues 443–467 are compositionally biased toward polar residues; it reads FQLNSSTNSTGSPLIITSQPMPFQL. The segment covering 468–479 has biased composition (low complexity); it reads NSNSNTTASSSS. A compositionally biased stretch (polar residues) spans 480-490; the sequence is PITHSNLNTAI. Residues 491 to 508 show a composition bias toward low complexity; sequence TSTTTSNSNSNNNSNNNN. Gly residues predominate over residues 509 to 525; sequence SGGGGGGGGGGGGGGGT. Residue Asp-585 is the Proton acceptor; for protein kinase activity of the active site. An AAA region spans residues 863 to 1121; it reads GKEFIIVSGL…TMKIVLKNLD (259 aa). An ATP-binding site is contributed by 871 to 878; the sequence is GLSGVGKT. 2 disordered regions span residues 1040–1077 and 1261–1290; these read NNFS…NNNI and TTTT…NNSD. The segment covering 1261–1288 has biased composition (low complexity); that stretch reads TTTTNNNTTNNTNNNNTNNNNNNTNGNN. 2 helical membrane-spanning segments follow: residues 1567–1587 and 1599–1619; these read VMVI…TLLL and ISSW…IGHF. Residues 1965-1998 form a TPR repeat; sequence SQLMLAKAEFERINGNFEQAMEYFSEAISLAQQF. 2 disordered regions span residues 2071-2095 and 2299-2349; these read EYSN…QASI and GYNN…NNNK. Positions 2073 to 2095 are enriched in low complexity; it reads SNNNNNNNSNNNNNNANQSQASI. One can recognise a GAF domain in the interval 2215–2465; that stretch reads YFDRLLKRLM…SNARLFIKVN (251 aa). One can recognise a Histidine kinase domain in the interval 2491–2769; that stretch reads NMSHEMRTPL…TFHFCVELGK (279 aa). His-2494 carries the post-translational modification Phosphohistidine; by autocatalysis. Residues 2637 to 2648 show a composition bias toward low complexity; that stretch reads TTTNNKKQLNTD. Disordered regions lie at residues 2637-2673, 2785-2815, 2917-3030, 3134-3160, and 3247-3281; these read TTTN…SIDL, LLNN…NNNN, LSPK…NNNS, NNNI…HSQY, and NSIS…TITT. A compositionally biased stretch (acidic residues) spans 2649-2673; it reads NDGDDDDDDDNENLDENNEDTSIDL. Composition is skewed to low complexity over residues 2787-2815, 2935-3029, and 3134-3145; these read NNNN…NNNN, LSSS…HNNN, and NNNINNINNNNN. The region spanning 3305–3424 is the Response regulatory domain; that stretch reads KILIVEDNEM…DLRYVINRYG (120 aa). A 4-aspartylphosphate modification is found at Asp-3356.

This sequence belongs to the protein kinase superfamily. Ser/Thr protein kinase family. In terms of processing, activation probably requires transfer of a phosphate group between a histidine in the kinase core (transmitter) domain and an aspartate of the receiver domain.

Its subcellular location is the membrane. It carries out the reaction ATP + protein L-histidine = ADP + protein N-phospho-L-histidine.. The enzyme catalyses L-seryl-[protein] + ATP = O-phospho-L-seryl-[protein] + ADP + H(+). The catalysed reaction is L-threonyl-[protein] + ATP = O-phospho-L-threonyl-[protein] + ADP + H(+). Functionally, acts as a receptor histidine kinase for a signal transduction pathway. This protein undergoes an ATP-dependent autophosphorylation at a conserved histidine residue in the kinase core, and a phosphoryl group is then transferred to a conserved aspartate residue in the receiver domain. The chain is Hybrid signal transduction histidine kinase G (dhkG) from Dictyostelium discoideum (Social amoeba).